A 65-amino-acid chain; its full sequence is Period circadian protein (65 aa).

The tract at residues 1–65 is disordered; the sequence is EGSGGSGSSG…VTLTESLLNK (65 aa). Residues 18–28 show a composition bias toward polar residues; it reads VRMSSVTNTSN. Over residues 29–38 the composition is skewed to low complexity; sequence AGTGTSAGDN. Over residues 56-65 the composition is skewed to polar residues; that stretch reads VTLTESLLNK.

Forms a heterodimer with timeless (TIM); the complex then translocates into the nucleus. Post-translationally, phosphorylated with a circadian rhythmicity, probably by the double-time protein (dbt). Phosphorylation could be implicated in the stability of per monomer and in the formation of heterodimer per-tim.

It is found in the nucleus. It localises to the cytoplasm. The protein resides in the perinuclear region. Essential for biological clock functions. Determines the period length of circadian and ultradian rhythms; an increase in PER dosage leads to shortened circadian rhythms and a decrease leads to lengthened circadian rhythms. Essential for the circadian rhythmicity of locomotor activity, eclosion behavior, and for the rhythmic component of the male courtship song that originates in the thoracic nervous system. The biological cycle depends on the rhythmic formation and nuclear localization of the TIM-PER complex. Light induces the degradation of TIM, which promotes elimination of PER. Nuclear activity of the heterodimer coordinatively regulates PER and TIM transcription through a negative feedback loop. Behaves as a negative element in circadian transcriptional loop. Does not appear to bind DNA, suggesting indirect transcriptional inhibition. The polypeptide is Period circadian protein (per) (Drosophila mojavensis (Fruit fly)).